The primary structure comprises 362 residues: 3-dehydroquinate synthase (362 aa).

NAD(+)-binding positions include 72–77 (SGEQAK), 106–110 (GVVGD), 130–131 (TT), K142, and K151. 3 residues coordinate Zn(2+): E184, H246, and H263.

This sequence belongs to the sugar phosphate cyclases superfamily. Dehydroquinate synthase family. It depends on NAD(+) as a cofactor. Co(2+) serves as cofactor. Requires Zn(2+) as cofactor.

The protein resides in the cytoplasm. The enzyme catalyses 7-phospho-2-dehydro-3-deoxy-D-arabino-heptonate = 3-dehydroquinate + phosphate. The protein operates within metabolic intermediate biosynthesis; chorismate biosynthesis; chorismate from D-erythrose 4-phosphate and phosphoenolpyruvate: step 2/7. In terms of biological role, catalyzes the conversion of 3-deoxy-D-arabino-heptulosonate 7-phosphate (DAHP) to dehydroquinate (DHQ). This is 3-dehydroquinate synthase from Bacillus subtilis (strain 168).